The following is a 55-amino-acid chain: Large ribosomal subunit protein bL33A (55 aa).

The protein belongs to the bacterial ribosomal protein bL33 family.

The protein is Large ribosomal subunit protein bL33A of Mycolicibacterium vanbaalenii (strain DSM 7251 / JCM 13017 / BCRC 16820 / KCTC 9966 / NRRL B-24157 / PYR-1) (Mycobacterium vanbaalenii).